We begin with the raw amino-acid sequence, 307 residues long: tRNA dimethylallyltransferase (307 aa).

16–23 (GCTAVGKT) is an ATP binding site. 18-23 (TAVGKT) lines the substrate pocket. The interaction with substrate tRNA stretch occupies residues 41–44 (DSLL).

This sequence belongs to the IPP transferase family. In terms of assembly, monomer. Mg(2+) is required as a cofactor.

It catalyses the reaction adenosine(37) in tRNA + dimethylallyl diphosphate = N(6)-dimethylallyladenosine(37) in tRNA + diphosphate. In terms of biological role, catalyzes the transfer of a dimethylallyl group onto the adenine at position 37 in tRNAs that read codons beginning with uridine, leading to the formation of N6-(dimethylallyl)adenosine (i(6)A). In Opitutus terrae (strain DSM 11246 / JCM 15787 / PB90-1), this protein is tRNA dimethylallyltransferase.